A 484-amino-acid chain; its full sequence is Bifunctional protein GlmU (484 aa).

Residues Met1–Arg240 are pyrophosphorylase. UDP-N-acetyl-alpha-D-glucosamine is bound by residues Leu12–Gly15, Lys26, Gln83, and Gly88–Thr89. Residue Asp113 coordinates Mg(2+). Residues Gly150, Glu165, Asn180, and Asn238 each contribute to the UDP-N-acetyl-alpha-D-glucosamine site. Asn238 is a binding site for Mg(2+). Residues Val241–Asn261 form a linker region. An N-acetyltransferase region spans residues Gly262–Gly484. Arg343 and Lys361 together coordinate UDP-N-acetyl-alpha-D-glucosamine. Catalysis depends on His373, which acts as the Proton acceptor. 2 residues coordinate UDP-N-acetyl-alpha-D-glucosamine: Tyr376 and Asn387. Acetyl-CoA is bound by residues Ala390, Asn396–Tyr397, Ser415, and Ala433. Positions Glu461–Gly484 are disordered.

It in the N-terminal section; belongs to the N-acetylglucosamine-1-phosphate uridyltransferase family. This sequence in the C-terminal section; belongs to the transferase hexapeptide repeat family. As to quaternary structure, homotrimer. Mg(2+) is required as a cofactor.

The protein localises to the cytoplasm. It catalyses the reaction alpha-D-glucosamine 1-phosphate + acetyl-CoA = N-acetyl-alpha-D-glucosamine 1-phosphate + CoA + H(+). It carries out the reaction N-acetyl-alpha-D-glucosamine 1-phosphate + UTP + H(+) = UDP-N-acetyl-alpha-D-glucosamine + diphosphate. It participates in nucleotide-sugar biosynthesis; UDP-N-acetyl-alpha-D-glucosamine biosynthesis; N-acetyl-alpha-D-glucosamine 1-phosphate from alpha-D-glucosamine 6-phosphate (route II): step 2/2. The protein operates within nucleotide-sugar biosynthesis; UDP-N-acetyl-alpha-D-glucosamine biosynthesis; UDP-N-acetyl-alpha-D-glucosamine from N-acetyl-alpha-D-glucosamine 1-phosphate: step 1/1. Its pathway is bacterial outer membrane biogenesis; LPS lipid A biosynthesis. Catalyzes the last two sequential reactions in the de novo biosynthetic pathway for UDP-N-acetylglucosamine (UDP-GlcNAc). The C-terminal domain catalyzes the transfer of acetyl group from acetyl coenzyme A to glucosamine-1-phosphate (GlcN-1-P) to produce N-acetylglucosamine-1-phosphate (GlcNAc-1-P), which is converted into UDP-GlcNAc by the transfer of uridine 5-monophosphate (from uridine 5-triphosphate), a reaction catalyzed by the N-terminal domain. The polypeptide is Bifunctional protein GlmU (Corynebacterium diphtheriae (strain ATCC 700971 / NCTC 13129 / Biotype gravis)).